The sequence spans 308 residues: Lipoyl synthase (308 aa).

[4Fe-4S] cluster-binding residues include C51, C56, C62, C77, C81, C84, and S290. Positions 63-279 (WSKRHATFMI…ETIAKSKGFL (217 aa)) constitute a Radical SAM core domain.

This sequence belongs to the radical SAM superfamily. Lipoyl synthase family. [4Fe-4S] cluster serves as cofactor.

The protein localises to the cytoplasm. The catalysed reaction is [[Fe-S] cluster scaffold protein carrying a second [4Fe-4S](2+) cluster] + N(6)-octanoyl-L-lysyl-[protein] + 2 oxidized [2Fe-2S]-[ferredoxin] + 2 S-adenosyl-L-methionine + 4 H(+) = [[Fe-S] cluster scaffold protein] + N(6)-[(R)-dihydrolipoyl]-L-lysyl-[protein] + 4 Fe(3+) + 2 hydrogen sulfide + 2 5'-deoxyadenosine + 2 L-methionine + 2 reduced [2Fe-2S]-[ferredoxin]. It participates in protein modification; protein lipoylation via endogenous pathway; protein N(6)-(lipoyl)lysine from octanoyl-[acyl-carrier-protein]: step 2/2. Its function is as follows. Catalyzes the radical-mediated insertion of two sulfur atoms into the C-6 and C-8 positions of the octanoyl moiety bound to the lipoyl domains of lipoate-dependent enzymes, thereby converting the octanoylated domains into lipoylated derivatives. The sequence is that of Lipoyl synthase from Pelagibacter ubique (strain HTCC1062).